The primary structure comprises 547 residues: Putative laccase-5 (547 aa).

Residues 1–35 (MGTPRGLRNAGSSSSACRFLAAFAVLLALPTLTAG) form the signal peptide. Plastocyanin-like domains are found at residues 43 to 159 (NVQM…PKRG) and 170 to 323 (ELPP…YAPT). Asparagine 48 and asparagine 89 each carry an N-linked (GlcNAc...) asparagine glycan. Positions 93, 95, 138, and 140 each coordinate Cu cation. N-linked (GlcNAc...) asparagine glycans are attached at residues asparagine 199, asparagine 215, asparagine 251, asparagine 311, asparagine 342, asparagine 349, asparagine 388, asparagine 395, asparagine 405, and asparagine 430. Positions 408–531 (FVRPRVALLE…SMAWLVNDGP (124 aa)) constitute a Plastocyanin-like 3 domain. Cu cation contacts are provided by histidine 448, histidine 451, histidine 453, histidine 510, cysteine 511, histidine 512, and histidine 516.

It belongs to the multicopper oxidase family. Cu cation serves as cofactor.

It is found in the secreted. It localises to the extracellular space. Its subcellular location is the apoplast. It carries out the reaction 4 hydroquinone + O2 = 4 benzosemiquinone + 2 H2O. Functionally, lignin degradation and detoxification of lignin-derived products. The sequence is that of Putative laccase-5 (LAC5) from Oryza sativa subsp. japonica (Rice).